The chain runs to 502 residues: Protein DETOXIFICATION 7 (502 aa).

12 consecutive transmembrane segments (helical) span residues 36–56 (MAAPMVAVSVSQFLLQVISMV), 68–88 (AVAIATSLTNVTGFSLIVGFA), 112–132 (YSSMLCLLVFCFSISIVWFFM), 143–163 (PLISQLACRYSIWLIPALFGF), 182–202 (LFVSSLGALCFHIPFCWLLVY), 208–228 (IVGAALSIGFSYWLNVFLLWI), 262–282 (AMMICLEWWSFEILLLMSGLL), 291–311 (VISICLTTSAVHFVLVNAIGA), 331–351 (AAVNSAIFLGGVGALITTITL), 375–395 (ITPILCLSIFVNSFLAVLSGV), 408–428 (ASLGSYYLVGIPLGWFLCFVM), and 436–456 (WIGILIASTIQLIVFALVTFF).

The protein belongs to the multi antimicrobial extrusion (MATE) (TC 2.A.66.1) family.

It is found in the membrane. The chain is Protein DETOXIFICATION 7 from Arabidopsis thaliana (Mouse-ear cress).